Reading from the N-terminus, the 355-residue chain is N6-Methyl-AMP deaminase (355 aa).

Zn(2+) is bound by residues His24 and His26. N(6)-methyl-AMP is bound by residues His26, Asn28, His74, 106-109, Asp148, and Gly181; that span reads STPR. Position 208 (His208) interacts with Zn(2+). The N(6)-methyl-AMP site is built by Glu211, Asp293, and Asp294. Glu211 serves as the catalytic Proton donor. Asp293 lines the Zn(2+) pocket.

The protein belongs to the metallo-dependent hydrolases superfamily. Adenosine and AMP deaminases family. As to quaternary structure, monomer. Zn(2+) is required as a cofactor.

The catalysed reaction is N(6)-methyl-AMP + H2O + H(+) = IMP + methylamine. Functionally, catalyzes the hydrolysis of the free cytosolic methylated adenosine nucleotide N(6)-methyl-AMP (N6-mAMP) to produce inositol monophosphate (IMP) and methylamine. Is required for the catabolism of cytosolic N6-mAMP, which is derived from the degradation of mRNA containing N6-methylated adenine (m6A). Catalyzes the removal of different alkyl groups not only from N6-substituted purine or 2-aminopurine nucleoside monophosphates but also from O6-substituted compounds in vitro. The polypeptide is N6-Methyl-AMP deaminase (Homo sapiens (Human)).